Consider the following 308-residue polypeptide: Protoheme IX farnesyltransferase (308 aa).

The next 9 helical transmembrane spans lie at 20-40 (VLAY…VTAI), 53-73 (PLLI…ANTF), 102-122 (NALV…WWTT), 124-144 (LLSG…YTLL), 149-169 (TSQN…IGWS), 170-190 (AITD…FFWT), 227-249 (LIYT…WLYM), 254-276 (VAGA…GEPV), and 288-308 (YLAV…PTLF).

This sequence belongs to the UbiA prenyltransferase family. Protoheme IX farnesyltransferase subfamily.

It is found in the cell membrane. The enzyme catalyses heme b + (2E,6E)-farnesyl diphosphate + H2O = Fe(II)-heme o + diphosphate. Its pathway is porphyrin-containing compound metabolism; heme O biosynthesis; heme O from protoheme: step 1/1. Converts heme B (protoheme IX) to heme O by substitution of the vinyl group on carbon 2 of heme B porphyrin ring with a hydroxyethyl farnesyl side group. In Mycobacterium leprae (strain TN), this protein is Protoheme IX farnesyltransferase.